The chain runs to 66 residues: Small ribosomal subunit protein eS27 (66 aa).

Zn(2+) contacts are provided by Cys21, Cys24, Cys40, and Cys43. The C4-type zinc finger occupies 21–43 (CPNCGNEQTVFSHATFPVRCLSC).

The protein belongs to the eukaryotic ribosomal protein eS27 family. Part of the 30S ribosomal subunit. The cofactor is Zn(2+).

This chain is Small ribosomal subunit protein eS27, found in Sulfurisphaera tokodaii (strain DSM 16993 / JCM 10545 / NBRC 100140 / 7) (Sulfolobus tokodaii).